We begin with the raw amino-acid sequence, 1454 residues long: MAPVQLENHQLVPPGGGGGGSGGPPSAPAPPPPGAAVAAAAAAAASPGYRLSTLIEFLLHRAYSELMVLTDLLPRKSDVERKIEIVQFASRTRQLFVRLLALVKWANNAGKVEKCAMISSFLDQQAILFVDTADRLASLARDALVHARLPSFAIPYAIDVLTTGSYPRLPTCIRDKIIPPDPITKIEKQATLHQLNQILRHRLVTTDLPPQLANLTVANGRVKFRVEGEFEATLTVMGDDPDVPWRLLKLEILVEDKETGDGRALVHSMQISFIHQLVQSRLFADEKPLQDMYNCLHSFCLSLQLEVLHSQTLMLIRERWGDLVQVERYHAGKCLSLSVWNQQVLGRKTGTASVHKVTIKIDENDVSKPLQIFHDPPLPASDSKLVERAMKIDHLSIEKLLIDSVHARAHQKLQELKAILRGFNANENSSIETALPALVVPILEPCGNSECLHIFVDLHSGMFQLMLYGLDQATLDDMEKSVNDDMKRIIPWIQQLKFWLGQQRCKQSIKHLPTISSETLQLSNYSTHPIGNLSKNKLFIKLTRLPQYYIVVEMLEVPNKPTQLSYKYYFMSVNAADREDSPAMALLLQQFKENIQDLVFRTKTGKQTRTNAKRKLSDDPCPVESKKTKRAGEMCAFNKVLAHFVAMCDTNMPFVGLRLELSNLEIPHQGVQVEGDGFSHAIRLLKIPPCKGITEETQKALDRSLLDCTFRLQGRNNRTWVAELVFANCPLNGTSTREQGPSRHVYLTYENLLSEPVGGRKVVEMFLNDWNSIARLYECVLEFARSLPDIPAHLNIFSEVRVYNYRKLILCYGTTKGSSISIQWNSIHQKFHISLGTVGPNSGCSNCHNTILHQLQEMFNKTPNVVQLLQVLFDTQAPLNAINKLPTVPMLGLTQRTNTAYQCFSILPQSSTHIRLAFRNMYCIDIYCRSRGVVAIRDGAYSLFDNSKLVEGFYPAPGLKTFLNMFVDSNQDARRRSVNEDDNPPSPIGGDMMDSLISQLQPPPQQQPFPKQPGTSGAYPLTSPPTSYHSTVNQSPSMMHTQSPGNLHAASSPSGALRAPSPASFVPTPPPSSHGISIGPGASFASPHGTLDPSSPYTMVSPSGRAGNWPGSPQVSGPSPAARMPGMSPANPSLHSPVPDASHSPRAGTSSQTMPTNMPPPRKLPQRSWAASIPTILTHSALNILLLPSPTPGLVPGLAGSYLCSPLERFLGSVIMRRHLQRIIQQETLQLINSNEPGVIMFKTDALKCRVALSPKTNQTLQLKVTPENAGQWKPDELQVLEKFFETRVAGPPFKANTLIAFTKLLGAPTHILRDCVHIMKLELFPDQATQLKWNVQFCLTIPPSAPPIAPPGTPAVVLKSKMLFFLQLTQKTSVPPQEPVSIIVPIIYDMASGTTQQADIPRQQNSSVAAPMMVSNILKRFAEMNPPRQGECTIFAAVRDLMANLTLPPGGRP.

The tract at residues 1–34 (MAPVQLENHQLVPPGGGGGGSGGPPSAPAPPPPG) is disordered. Gly residues predominate over residues 14–23 (PGGGGGGSGG). The segment covering 25-34 (PSAPAPPPPG) has biased composition (pro residues). Positions 69–73 (LTDLL) match the LXXLL motif 1 motif. Positions 188–566 (KQATLHQLNQ…VPNKPTQLSY (379 aa)) are interaction with STAT2. The segment at 500–824 (LGQQRCKQSI…TKGSSISIQW (325 aa)) is interaction with SREBF1. Phosphoserine is present on residues Ser-617 and Ser-986. The segment at 973–1167 (ARRRSVNEDD…MPPPRKLPQR (195 aa)) is disordered. Residues 1001–1011 (QPPPQQQPFPK) are compositionally biased toward pro residues. 2 stretches are compositionally biased toward polar residues: residues 1024–1054 (PPTS…SSPS) and 1092–1101 (DPSSPYTMVS). Residues Ser-1112, Ser-1119, Ser-1128, Ser-1136, and Ser-1144 each carry the phosphoserine modification. Positions 1147–1156 (AGTSSQTMPT) are enriched in polar residues. An LXXLL motif 2 motif is present at residues 1182-1186 (LNILL).

Belongs to the Mediator complex subunit 14 family. Interacts with GATA1. Component of the Mediator complex, which is composed of MED1, MED4, MED6, MED7, MED8, MED9, MED10, MED11, MED12, MED13, MED13L, MED14, MED15, MED16, MED17, MED18, MED19, MED20, MED21, MED22, MED23, MED24, MED25, MED26, MED27, MED29, MED30, MED31, CCNC, CDK8 and CDC2L6/CDK11. The MED12, MED13, CCNC and CDK8 subunits form a distinct module termed the CDK8 module. Mediator containing the CDK8 module is less active than Mediator lacking this module in supporting transcriptional activation. Individual preparations of the Mediator complex lacking one or more distinct subunits have been variously termed ARC, CRSP, DRIP, PC2, SMCC and TRAP. Interacts with AR, ESR1, SREBF1 and STAT2. Ubiquitous.

It is found in the nucleus. Component of the Mediator complex, a coactivator involved in the regulated transcription of nearly all RNA polymerase II-dependent genes. Mediator functions as a bridge to convey information from gene-specific regulatory proteins to the basal RNA polymerase II transcription machinery. Mediator is recruited to promoters by direct interactions with regulatory proteins and serves as a scaffold for the assembly of a functional preinitiation complex with RNA polymerase II and the general transcription factors. The sequence is that of Mediator of RNA polymerase II transcription subunit 14 (MED14) from Homo sapiens (Human).